The chain runs to 378 residues: Metacaspase-1B (378 aa).

Residues 1-70 (MCSPPPYPPQ…QEAQSFGGGA (70 aa)) form a disordered region. The span at 10 to 29 (QGHHYPPSPHGSYYSPTPYG) shows a compositional bias: low complexity. Residues His-169 and Cys-225 contribute to the active site.

It belongs to the peptidase C14B family.

Involved in cell death (apoptosis). This chain is Metacaspase-1B (casB), found in Aspergillus terreus (strain NIH 2624 / FGSC A1156).